A 573-amino-acid chain; its full sequence is Plasmepsin X (573 aa).

The first 26 residues, 1 to 26, serve as a signal peptide directing secretion; sequence MKRISPLNTLFYLSLFFSYTFKGLKC. Positions 27–221 are excised as a propeptide; the sequence is TRIYKIGTKA…SSIEKNFIAL (195 aa). Cystine bridges form between cysteine 39–cysteine 51 and cysteine 42–cysteine 48. A disordered region spans residues 167–211; sequence KGNKNFTNNENNSDNENNSDNENNSDNENNLDNENNLDNENNSDN. Residues 183–203 are compositionally biased toward acidic residues; the sequence is NNSDNENNSDNENNLDNENNL. Residues 248 to 567 form the Peptidase A1 domain; the sequence is FVGELLVGTP…ESRPSMVGVA (320 aa). The active site involves aspartate 266. Cysteine 279 and cysteine 284 are joined by a disulfide. N-linked (GlcNAc...) asparagine glycosylation occurs at asparagine 334. Cysteines 447 and 448 form a disulfide. Aspartate 457 is a catalytic residue. Cysteines 482 and 521 form a disulfide.

Belongs to the peptidase A1 family. In terms of processing, autocleaved into a p16 prodomain form and two mature forms p44 and p51.

The protein resides in the cytoplasmic vesicle. Its subcellular location is the secretory vesicle. Inhibited by aminohydantoin compounds such as CWHM-117. Functionally, during the asexual blood stage, processes key proteins essential for merozoite egress and invasion of host erythrocytes. Cleaves and activates proteases SUB1 and SUB2. May process members of the EBL and Rh protein families. Also cleaves apical membrane protein AMA1. During the mosquito vector stage and probably in ookinetes, cleaves CelTOS. The polypeptide is Plasmepsin X (Plasmodium falciparum (isolate NF54)).